The chain runs to 744 residues: Tripartite motif-containing protein 3 (744 aa).

Alanine 2 bears the N-acetylalanine mark. The interval alanine 2–proline 290 is interaction with KIF21B. Residue serine 7 is modified to Phosphoserine. An RING-type zinc finger spans residues cysteine 22 to arginine 63. Residues glycine 110 to leucine 151 form a B box-type zinc finger. Zn(2+) contacts are provided by cysteine 115, histidine 118, cysteine 138, and histidine 143. Residues aspartate 153 to glutamate 224 are a coiled coil. One copy of the Filamin repeat lies at threonine 317–alanine 418. The disordered stretch occupies residues leucine 419–lysine 464. Serine 427 carries the phosphoserine modification. NHL repeat units follow at residues valine 473 to glutamate 516, lysine 520 to glutamate 563, glycine 564 to asparagine 605, valine 609 to aspartate 652, leucine 656 to serine 699, and glycine 700 to leucine 743.

Belongs to the TRIM/RBCC family. As to quaternary structure, forms homooligomers. Interacts with TRIM2; this interaction reduces TRIM2 activity. Associates with myosin-Vb (MYO5B) and alpha-actinin-4 (ACTN4). Component of the CART complex, at least composed of ACTN4, HGS/HRS, MYO5B and TRIM3. Interacts with ZFYVE28/LST2. Interacts with KIF21B.

Its subcellular location is the cytoplasm. It is found in the early endosome. The protein localises to the golgi apparatus. The protein resides in the trans-Golgi network. It localises to the cell projection. Its subcellular location is the dendrite. The enzyme catalyses S-ubiquitinyl-[E2 ubiquitin-conjugating enzyme]-L-cysteine + [acceptor protein]-L-lysine = [E2 ubiquitin-conjugating enzyme]-L-cysteine + N(6)-ubiquitinyl-[acceptor protein]-L-lysine.. In terms of biological role, E3 ubiquitin ligase that plays essential roles in neuronal functions such as regulation of neuronal plasticity, learning, and memory. In addition to its neuronal functions, participates in other biological processes such as innate immunity or cell cycle regulation. Component of the cytoskeleton-associated recycling or transport complex in neurons, polyubiquitinates gamma-actin, thus regulating neuronal plasticity, learning, and memory. Ubiquitinates postsynaptic scaffold GKAP, a neuronal substrate involved in synaptic remodeling and thereby modulates dendritic spine morphology. Positively regulates motility of microtubule-dependent motor protein KIF21B. Induces growth arrest via its RING-dependent E3 ligase activity and ubiquinates CDKN1A. Positively regulates TLR3-mediated signaling by mediating 'Lys-63'-linked polyubiquitination of TLR3. In turn, promotes the recognition and sorting of polyubiquitinated TLR3 by the ESCRT complexes. The sequence is that of Tripartite motif-containing protein 3 (Trim3) from Mus musculus (Mouse).